We begin with the raw amino-acid sequence, 281 residues long: UPF0294 protein VP2298 (281 aa).

The protein belongs to the UPF0294 family.

The protein resides in the cytoplasm. The sequence is that of UPF0294 protein VP2298 from Vibrio parahaemolyticus serotype O3:K6 (strain RIMD 2210633).